Reading from the N-terminus, the 177-residue chain is Translation initiation factor IF-3 (177 aa).

This sequence belongs to the IF-3 family. Monomer.

It localises to the cytoplasm. Functionally, IF-3 binds to the 30S ribosomal subunit and shifts the equilibrium between 70S ribosomes and their 50S and 30S subunits in favor of the free subunits, thus enhancing the availability of 30S subunits on which protein synthesis initiation begins. In Nostoc punctiforme (strain ATCC 29133 / PCC 73102), this protein is Translation initiation factor IF-3.